Here is a 240-residue protein sequence, read N- to C-terminus: Large ribosomal subunit protein uL2 (240 aa).

The segment covering 1-11 has biased composition (polar residues); it reads MGKRLISQNRG. Disordered stretches follow at residues 1-26 and 206-240; these read MGKRLISQNRGRGTPKYRSPSHKRKG and GGGRHQHLGKPSSVSRNTSPGRKVGHIASRRTGRK. Basic residues-rich tracts occupy residues 13–26 and 228–240; these read GTPKYRSPSHKRKG and KVGHIASRRTGRK.

The protein belongs to the universal ribosomal protein uL2 family. As to quaternary structure, part of the 50S ribosomal subunit. Forms a bridge to the 30S subunit in the 70S ribosome.

One of the primary rRNA binding proteins. Required for association of the 30S and 50S subunits to form the 70S ribosome, for tRNA binding and peptide bond formation. It has been suggested to have peptidyltransferase activity; this is somewhat controversial. Makes several contacts with the 16S rRNA in the 70S ribosome. This chain is Large ribosomal subunit protein uL2, found in Methanococcus vannielii (strain ATCC 35089 / DSM 1224 / JCM 13029 / OCM 148 / SB).